The sequence spans 250 residues: DNA repair protein RecO (250 aa).

The protein belongs to the RecO family.

In terms of biological role, involved in DNA repair and RecF pathway recombination. This Rhodospirillum centenum (strain ATCC 51521 / SW) protein is DNA repair protein RecO.